The following is a 172-amino-acid chain: Myosin regulatory light polypeptide 9 (172 aa).

The segment covering 1 to 16 has biased composition (basic residues); it reads MSSKRAKAKTTKKRPQ. The interval 1–20 is disordered; that stretch reads MSSKRAKAKTTKKRPQRATS. Ser-2 is subject to N-acetylserine. A Phosphothreonine; by MLCK, CIT and ROCK2 modification is found at Thr-19. The residue at position 20 (Ser-20) is a Phosphoserine; by CDC42BP, CIT, MLCK, PAK1, ROCK1, ROCK2, DAPK1, DAPK2 and ZIPK/DAPK3. 3 consecutive EF-hand domains span residues 29-64, 98-133, and 134-169; these read SQIQEFKEAFNMIDQNRDGFIDKEDLHDMLASLGKN, DPEDVIRNAFACFDEEASGFIHEDHLRELLTTMGDR, and FTDEEVDEMYREAPIDKKGNFNYVEFTRILKHGAKD. 4 residues coordinate Ca(2+): Asp-42, Asn-44, Asp-46, and Asp-53.

As to quaternary structure, myosin is a hexamer of 2 heavy chains and 4 light chains: interacts with myosin heavy chain MYO19. Interacts with LUZP1; the interaction results in inhibition of phosphorylation of MYL9 by DAPK3. Post-translationally, phosphorylation increases the actin-activated myosin ATPase activity and thereby regulates the contractile activity. It is required to generate the driving force in the migration of the cells but not necessary for localization of myosin-2 at the leading edge. Phosphorylation is required for myotube formation. Phosphorylated by DAPK3; DAPK3-mediated phosphorylation is inhibited by LUZP1.

It localises to the cytoplasm. Its subcellular location is the cytoskeleton. The protein localises to the cell cortex. In terms of biological role, myosin regulatory subunit that plays an important role in regulation of both smooth muscle and nonmuscle cell contractile activity via its phosphorylation. Implicated in cytokinesis, receptor capping, and cell locomotion. In myoblasts, regulates PIEZO1-dependent cortical actomyosin assembly involved in myotube formation. The protein is Myosin regulatory light polypeptide 9 (Myl9) of Mus musculus (Mouse).